The sequence spans 158 residues: Ribonuclease H (158 aa).

Positions 3-144 (GLKQLLIFTD…CDTLAREAAE (142 aa)) constitute an RNase H type-1 domain. Mg(2+) contacts are provided by Asp12, Glu50, Asp72, and Asp136.

The protein belongs to the RNase H family. Monomer. Requires Mg(2+) as cofactor.

The protein localises to the cytoplasm. The enzyme catalyses Endonucleolytic cleavage to 5'-phosphomonoester.. In terms of biological role, endonuclease that specifically degrades the RNA of RNA-DNA hybrids. The sequence is that of Ribonuclease H from Shewanella loihica (strain ATCC BAA-1088 / PV-4).